Reading from the N-terminus, the 685-residue chain is Polyphosphate kinase (685 aa).

N45 contacts ATP. Positions 375 and 405 each coordinate Mg(2+). H435 serves as the catalytic Phosphohistidine intermediate. Positions 468, 564, and 592 each coordinate ATP.

This sequence belongs to the polyphosphate kinase 1 (PPK1) family. It depends on Mg(2+) as a cofactor. An intermediate of this reaction is the autophosphorylated ppk in which a phosphate is covalently linked to a histidine residue through a N-P bond.

The enzyme catalyses [phosphate](n) + ATP = [phosphate](n+1) + ADP. In terms of biological role, catalyzes the reversible transfer of the terminal phosphate of ATP to form a long-chain polyphosphate (polyP). The sequence is that of Polyphosphate kinase from Neisseria meningitidis serogroup B (strain ATCC BAA-335 / MC58).